The sequence spans 1470 residues: Membrane-associated guanylate kinase, WW and PDZ domain-containing protein 3 (1470 aa).

Residues 18-108 (CAVSWAGPPG…PIRLKTVKPG (91 aa)) enclose the PDZ 1 domain. The segment at 18–108 (CAVSWAGPPG…PIRLKTVKPG (91 aa)) is interaction with ADRB1 and TGFA. The region spanning 116–290 (RHYLSLQFQK…RSMDFRNYMM (175 aa)) is the Guanylate kinase-like domain. 123-130 (FQKGSIDH) is an ATP binding site. Residues 184–266 (TYDGNFYGTP…ETREMHSESS (83 aa)) are disordered. The segment covering 193–204 (PKPPAEPSPFQP) has biased composition (pro residues). S236 is modified (phosphoserine). Acidic residues predominate over residues 238–247 (LPEEEEDEDK). 2 consecutive WW domains span residues 296–329 (EPLPKNWEMAYTDTGTIYFIDHNTKTTTWLDPRL) and 342–375 (GELPYGWEKIEDPQYGTYYVDHLNQKTQFENPVE). A PDZ 2 domain is found at 413-495 (RASLKKSTMG…NQYVNLTLCR (83 aa)). An interaction with PTEN region spans residues 413–495 (RASLKKSTMG…NQYVNLTLCR (83 aa)). The segment at 550-575 (LLSSDRLNGPSDSNEQRASLASSGSS) is disordered. A compositionally biased stretch (polar residues) spans 559–575 (PSDSNEQRASLASSGSS). Residues 581 to 657 (TIPLVKGPKG…GADVPLLILR (77 aa)) form the PDZ 3 domain. S598 carries the post-translational modification Phosphoserine. Residues 665–700 (KTAKMKTDTKETSGSLETINEPTPQPMPFPPSIIRS) are disordered. Over residues 676 to 686 (TSGSLETINEP) the composition is skewed to polar residues. A Phosphoserine modification is found at S702. In terms of domain architecture, PDZ 4 spans 729–811 (DVFLRKQESG…NGHVLLTVRR (83 aa)). The interval 729–811 (DVFLRKQESG…NGHVLLTVRR (83 aa)) is interaction with ADGRB1. Residues 818-847 (KQPEDESPQAFSQSGSPRLNRTELPTRSAP) form a disordered region. A compositionally biased stretch (polar residues) spans 826 to 847 (QAFSQSGSPRLNRTELPTRSAP). Residues S833 and S916 each carry the phosphoserine modification. The PDZ 5 domain maps to 852–939 (DVILQRKENE…TVTLTVVAEE (88 aa)). Residues 852-939 (DVILQRKENE…TVTLTVVAEE (88 aa)) form an interaction with LPAR2 and GRIN2B region. The segment at 939 to 976 (EEHHGPPSGTNSARQSPALQHRPMGQAQATHIPGDRTA) is disordered. The segment covering 946–956 (SGTNSARQSPA) has biased composition (polar residues). In terms of domain architecture, PDZ 6 spans 1022 to 1104 (PVELERGPRG…KVLLLLRPGT (83 aa)). 2 disordered regions span residues 1124–1146 (IYDEQPPPLPSSHSAATFEESHV) and 1167–1470 (DTVQ…DKQL). Over residues 1175-1191 (TLNGSQPEMKYQSIQKN) the composition is skewed to polar residues. Composition is skewed to basic and acidic residues over residues 1193–1209 (SKKDPSRSHGHGDKNLL) and 1230–1263 (RHSEEHLEKIPRPLRSDPKGKSRDRSLSPRKGEN). Residues 1285–1304 (SSSPRKQQKIGGNSLSNTEG) show a composition bias toward polar residues. S1321 bears the Phosphoserine mark. Composition is skewed to basic and acidic residues over residues 1326–1340 (PEGKEKSGVSRKDLK), 1350–1361 (RSPEKRSSKVDE), 1377–1397 (VSEKEKGRKPGTGERSRDKTG), and 1422–1431 (EVTDRGKERA).

Belongs to the MAGUK family. Interacts with ADRB1, ADGRB1, LPAR2/EDG4, FZD4, FZD7, GRIN2B, TGFA and VANGL2. Interacts with PTEN. Interacts with ADRB1, PTPRB and unidentified tyrosine phosphorylated proteins. Interacts with DLL1. Interacts with PRRG4 (via cytoplasmic domain).

The protein localises to the cell membrane. It localises to the cell junction. It is found in the tight junction. Its subcellular location is the nucleus. In terms of biological role, acts as a scaffolding protein at cell-cell junctions, thereby regulating various cellular and signaling processes. Cooperates with PTEN to modulate the kinase activity of AKT1. Its interaction with PTPRB and tyrosine phosphorylated proteins suggests that it may link receptor tyrosine phosphatase with its substrates at the plasma membrane. In polarized epithelial cells, involved in efficient trafficking of TGFA to the cell surface. Regulates the ability of LPAR2 to activate ERK and RhoA pathways. Regulates the JNK signaling cascade via its interaction with FZD4 and VANGL2. The chain is Membrane-associated guanylate kinase, WW and PDZ domain-containing protein 3 (Magi3) from Rattus norvegicus (Rat).